Consider the following 433-residue polypeptide: Tol-Pal system protein TolB (433 aa).

The signal sequence occupies residues 1–21 (MINLFRGLLVVLCFASAMVAA).

Belongs to the TolB family. In terms of assembly, the Tol-Pal system is composed of five core proteins: the inner membrane proteins TolA, TolQ and TolR, the periplasmic protein TolB and the outer membrane protein Pal. They form a network linking the inner and outer membranes and the peptidoglycan layer.

The protein resides in the periplasm. Functionally, part of the Tol-Pal system, which plays a role in outer membrane invagination during cell division and is important for maintaining outer membrane integrity. In Pseudomonas syringae pv. tomato (strain ATCC BAA-871 / DC3000), this protein is Tol-Pal system protein TolB.